Here is a 513-residue protein sequence, read N- to C-terminus: ATP synthase subunit alpha (513 aa).

Residue 169-176 (GDRQCGKT) participates in ATP binding.

The protein belongs to the ATPase alpha/beta chains family. As to quaternary structure, F-type ATPases have 2 components, CF(1) - the catalytic core - and CF(0) - the membrane proton channel. CF(1) has five subunits: alpha(3), beta(3), gamma(1), delta(1), epsilon(1). CF(0) has three main subunits: a(1), b(2) and c(9-12). The alpha and beta chains form an alternating ring which encloses part of the gamma chain. CF(1) is attached to CF(0) by a central stalk formed by the gamma and epsilon chains, while a peripheral stalk is formed by the delta and b chains.

Its subcellular location is the cell inner membrane. It carries out the reaction ATP + H2O + 4 H(+)(in) = ADP + phosphate + 5 H(+)(out). Functionally, produces ATP from ADP in the presence of a proton gradient across the membrane. The alpha chain is a regulatory subunit. The sequence is that of ATP synthase subunit alpha from Alteromonas mediterranea (strain DSM 17117 / CIP 110805 / LMG 28347 / Deep ecotype).